The chain runs to 147 residues: uncharacterized protein (147 aa).

The next 2 membrane-spanning stretches (helical) occupy residues 41 to 61 and 67 to 87; these read LANF…ALLI and LLAA…SFPL.

It is found in the cell membrane. This is an uncharacterized protein from Pyrococcus horikoshii (strain ATCC 700860 / DSM 12428 / JCM 9974 / NBRC 100139 / OT-3).